Consider the following 492-residue polypeptide: UPF0236 protein TTE1650/TTE2708 (492 aa).

This sequence belongs to the UPF0236 family.

In Caldanaerobacter subterraneus subsp. tengcongensis (strain DSM 15242 / JCM 11007 / NBRC 100824 / MB4) (Thermoanaerobacter tengcongensis), this protein is UPF0236 protein TTE1650/TTE2708.